A 268-amino-acid polypeptide reads, in one-letter code: Putative esterase/lipase 2 (268 aa).

The active site involves histidine 29. Serine 98 acts as the Charge relay system in catalysis.

The protein belongs to the lipase/esterase LIP3/BchO family.

In Mycoplasma genitalium (strain ATCC 33530 / DSM 19775 / NCTC 10195 / G37) (Mycoplasmoides genitalium), this protein is Putative esterase/lipase 2.